A 39-amino-acid chain; its full sequence is L-amino-acid oxidase (39 aa).

The protein belongs to the flavin monoamine oxidase family. FIG1 subfamily. Monomer. This is in contrast with most of its orthologs, that are non-covalently linked homodimers. FAD is required as a cofactor. Post-translationally, N-glycosylated. Expressed by the venom gland.

It localises to the secreted. The enzyme catalyses an L-alpha-amino acid + O2 + H2O = a 2-oxocarboxylate + H2O2 + NH4(+). It carries out the reaction L-leucine + O2 + H2O = 4-methyl-2-oxopentanoate + H2O2 + NH4(+). In terms of biological role, catalyzes an oxidative deamination of predominantly hydrophobic and aromatic L-amino acids, thus producing hydrogen peroxide that may contribute to the diverse toxic effects of this enzyme. Shows activity on L-Leu. Exhibits diverse biological activities, such as hemorrhage, hemolysis, edema, apoptosis of vascular endothelial cells or tumor cell lines, and antiparasitic activities, as well as regulation of platelet aggregation. Effects of snake L-amino oxidases on platelets are controversial, since they either induce aggregation or inhibit agonist-induced aggregation. These different effects are probably due to different experimental conditions. In addition, this protein inhibits dose-dependently the growth of Gram-positive, Gram-negative bacteria and yeast, probably by the generation of hydrogen peroxide. This is L-amino-acid oxidase from Bothrops marajoensis (Marajo lancehead).